We begin with the raw amino-acid sequence, 829 residues long: Transcription activator GutR (829 aa).

Residues 42 to 61 constitute a DNA-binding region (H-T-H motif); sequence IDKIALQLGVSPNTIKSWIG. An ATP-binding site is contributed by 200 to 207; sequence GWAGMGKT. TPR repeat units lie at residues 697-730, 736-769, and 775-808; these read HRVL…SSTY, IEAY…KHNA, and IYYH…IDSW.

Activator of the glucitol dehydrogenase gene (gutB). This chain is Transcription activator GutR (gutR), found in Bacillus subtilis (strain 168).